A 473-amino-acid chain; its full sequence is Cannabinoid receptor 1 (473 aa).

Residues 1-118 (MKSILDGLAD…CFMILNPSQQ (118 aa)) are Extracellular-facing. The interval 2 to 23 (KSILDGLADTTFRTITTDLLYV) is required for mitochondrial localization. N-linked (GlcNAc...) asparagine glycans are attached at residues Asn79 and Asn85. The chain crosses the membrane as a helical span at residues 119 to 144 (LAIAVLSLTLGTFTVLENLLVLCVIL). Residues 145–156 (HSRSLRCRPSYH) are Cytoplasmic-facing. The chain crosses the membrane as a helical span at residues 157–177 (FIGSLAVADLLGSVIFVYSFV). At 178–189 (DFHVFHRKDSPN) the chain is on the extracellular side. Residues 190 to 214 (VFLFKLGGVTASFTASVGSLFLTAI) traverse the membrane as a helical segment. Over 215 to 234 (DRYISIHRPLAYKRIVTRPK) the chain is Cytoplasmic. A helical transmembrane segment spans residues 235–257 (AVVAFCVMWTIAIVIAVLPLLGW). The Extracellular portion of the chain corresponds to 258–275 (NCKKLNSVCSDIFPLIDE). A helical transmembrane segment spans residues 276 to 301 (TYLMFWIGVTSILLLFIVYAYMYILW). Residues 302–346 (KAHSHAVRMLQRGTQKSIIIQSTEDGKVQITRPDQTRMDIRLAKT) are Cytoplasmic-facing. The helical transmembrane segment at 347 to 367 (LVLILVVLIICWGPLLAIMVY) threads the bilayer. Residues 368–379 (DVFGKMNKLIKT) lie on the Extracellular side of the membrane. The chain crosses the membrane as a helical span at residues 380–401 (IFAFCSMLCLLNSTVNPIIYAL). The Cytoplasmic segment spans residues 402–473 (RSKDLRHAFR…VSTDTTAEAL (72 aa)). A lipid anchor (S-palmitoyl cysteine) is attached at Cys417.

It belongs to the G-protein coupled receptor 1 family. In terms of processing, palmitoylation at Cys-417 is important for recruitment at both plasma membrane and lipid rafts and association with G protein alpha subunits.

The protein resides in the cell membrane. It is found in the mitochondrion outer membrane. The protein localises to the cell projection. Its subcellular location is the axon. It localises to the presynapse. In terms of biological role, G-protein coupled receptor for cannabinoids. Mediates many cannabinoid-induced effects in the central nervous system (CNS), as well as in peripheral tissues. Regulates cellular respiration and energy production in response to cannabinoids. Signaling typically involves reduction in cyclic AMP. This is Cannabinoid receptor 1 (CNR1) from Taeniopygia guttata (Zebra finch).